Here is a 378-residue protein sequence, read N- to C-terminus: Erythronate-4-phosphate dehydrogenase (378 aa).

Residues S45 and T66 each coordinate substrate. Residues D146 and T175 each contribute to the NAD(+) site. R208 is an active-site residue. Residue D232 coordinates NAD(+). The active site involves E237. H254 acts as the Proton donor in catalysis. G257 contacts NAD(+). Y258 contacts substrate.

This sequence belongs to the D-isomer specific 2-hydroxyacid dehydrogenase family. PdxB subfamily. As to quaternary structure, homodimer.

The protein resides in the cytoplasm. It catalyses the reaction 4-phospho-D-erythronate + NAD(+) = (R)-3-hydroxy-2-oxo-4-phosphooxybutanoate + NADH + H(+). It participates in cofactor biosynthesis; pyridoxine 5'-phosphate biosynthesis; pyridoxine 5'-phosphate from D-erythrose 4-phosphate: step 2/5. Its function is as follows. Catalyzes the oxidation of erythronate-4-phosphate to 3-hydroxy-2-oxo-4-phosphonooxybutanoate. This is Erythronate-4-phosphate dehydrogenase from Escherichia coli (strain ATCC 8739 / DSM 1576 / NBRC 3972 / NCIMB 8545 / WDCM 00012 / Crooks).